Here is a 267-residue protein sequence, read N- to C-terminus: Digeranylgeranylglyceryl phosphate synthase (267 aa).

The next 7 membrane-spanning stretches (helical) occupy residues 10–30 (ANCV…GALL), 33–53 (LHTP…GNAI), 80–100 (AALI…GLIN), 104–121 (LALA…AARL), 139–159 (TFLF…LSIL), 198–218 (VLAS…PLGI), and 247–267 (QRWI…GYHI).

Belongs to the UbiA prenyltransferase family. DGGGP synthase subfamily. Requires Mg(2+) as cofactor.

It is found in the cell membrane. It catalyses the reaction sn-3-O-(geranylgeranyl)glycerol 1-phosphate + (2E,6E,10E)-geranylgeranyl diphosphate = 2,3-bis-O-(geranylgeranyl)-sn-glycerol 1-phosphate + diphosphate. It functions in the pathway membrane lipid metabolism; glycerophospholipid metabolism. Functionally, prenyltransferase that catalyzes the transfer of the geranylgeranyl moiety of geranylgeranyl diphosphate (GGPP) to the C2 hydroxyl of (S)-3-O-geranylgeranylglyceryl phosphate (GGGP). This reaction is the second ether-bond-formation step in the biosynthesis of archaeal membrane lipids. The chain is Digeranylgeranylglyceryl phosphate synthase from Methanothrix thermoacetophila (strain DSM 6194 / JCM 14653 / NBRC 101360 / PT) (Methanosaeta thermophila).